The following is a 1613-amino-acid chain: Reverse gyrase (1613 aa).

The segment at 1-38 (MIPMIYKEMCPNCNGEITSERLAIGVCEKCLKEENVFE) adopts an RG N-terminal-type zinc-finger fold. Zn(2+) is bound by residues Cys-10, Cys-13, Cys-27, and Cys-30. Residues Gln-83 and 100 to 107 (VPTGVGKS) contribute to the ATP site. The Helicase ATP-binding domain occupies 87–291 (AKRVLKNKSF…LYRELLDFEI (205 aa)). The DEAD box signature appears at 203-206 (DDVD). A Helicase C-terminal domain is found at 310 to 525 (SKEKILEYIK…IDEVNLEELI (216 aa)). Residues 546 to 1613 (DLLKSVLMVV…ALHEEILSIR (1068 aa)) are topoisomerase I. In terms of domain architecture, Toprim spans 550–712 (SVLMVVESPN…NIYRVGFNEI (163 aa)). The Mg(2+) site is built by Glu-556 and Asp-681. Positions 733-1613 (DENKVKGQVV…ALHEEILSIR (881 aa)) constitute a Topo IA-type catalytic domain. The DOD-type homing endonuclease domain maps to 1070–1199 (FAGLVLGDGS…IGIYLNSIGI (130 aa)). The active-site O-(5'-phospho-DNA)-tyrosine intermediate is Tyr-1363.

This sequence in the N-terminal section; belongs to the DEAD box helicase family. DDVD subfamily. The protein in the C-terminal section; belongs to the type IA topoisomerase family. As to quaternary structure, monomer. The cofactor is Zn(2+). Requires Mg(2+) as cofactor. This protein undergoes a protein self splicing that involves a post-translational excision of the intervening region (intein) followed by peptide ligation.

It localises to the cytoplasm. The enzyme catalyses ATP + H2O = ADP + phosphate + H(+). In terms of biological role, modifies the topological state of DNA by introducing positive supercoils in an ATP-dependent process, increasing the linking number in steps of +1. Binds to single-stranded DNA, transiently cleaves and then rejoins the ends, introducing a positive supercoil in the process. The scissile phosphodiester is attacked by the catalytic tyrosine of the enzyme, resulting in the formation of a DNA-(5'-phosphotyrosyl)-enzyme intermediate. Probably involved in rewinding DNA strands in regions of the chromosome that have opened up to allow replication, transcription, DNA repair and/or for DNA protection. The sequence is that of Reverse gyrase from Methanocaldococcus jannaschii (strain ATCC 43067 / DSM 2661 / JAL-1 / JCM 10045 / NBRC 100440) (Methanococcus jannaschii).